A 125-amino-acid polypeptide reads, in one-letter code: Fluoride-specific ion channel FluC (125 aa).

2 consecutive transmembrane segments (helical) span residues 4–24 (LWVALGGALGALARYTVGVWI) and 34–54 (YGTFAINVTGCFLIGLALTVL). Na(+) is bound by residues Gly-74 and Thr-77. The chain crosses the membrane as a helical span at residues 99 to 119 (VLYFGSSLALGILAVWLGMVV).

The protein belongs to the fluoride channel Fluc/FEX (TC 1.A.43) family.

Its subcellular location is the cell inner membrane. The enzyme catalyses fluoride(in) = fluoride(out). With respect to regulation, na(+) is not transported, but it plays an essential structural role and its presence is essential for fluoride channel function. In terms of biological role, fluoride-specific ion channel. Important for reducing fluoride concentration in the cell, thus reducing its toxicity. This chain is Fluoride-specific ion channel FluC, found in Acidobacterium capsulatum (strain ATCC 51196 / DSM 11244 / BCRC 80197 / JCM 7670 / NBRC 15755 / NCIMB 13165 / 161).